A 156-amino-acid polypeptide reads, in one-letter code: Ribosome maturation factor RimP (156 aa).

The protein belongs to the RimP family.

It is found in the cytoplasm. Required for maturation of 30S ribosomal subunits. This Bacillus velezensis (strain DSM 23117 / BGSC 10A6 / LMG 26770 / FZB42) (Bacillus amyloliquefaciens subsp. plantarum) protein is Ribosome maturation factor RimP.